The chain runs to 55 residues: Large ribosomal subunit protein bL33 (55 aa).

It belongs to the bacterial ribosomal protein bL33 family.

The polypeptide is Large ribosomal subunit protein bL33 (Acidiphilium cryptum (strain JF-5)).